The chain runs to 1035 residues: Ephrin type-A receptor 6 (1035 aa).

The signal sequence occupies residues 1-22 (MGGCEVREFLLQFGFFLPLLTA). The Extracellular portion of the chain corresponds to 23 to 549 (WTGDCSHVSN…MAAEQGQILV (527 aa)). Residues 33–211 (QVVLLDTSTV…FYKKCPFTVR (179 aa)) form the Eph LBD domain. Fibronectin type-III domains follow at residues 330-440 (PPSA…TDQD) and 441-536 (APSL…TGDE). N-linked (GlcNAc...) asparagine glycosylation is found at asparagine 342, asparagine 396, and asparagine 409. Residues 550–570 (IATAAVGGFTLLVILTLFFLI) form a helical membrane-spanning segment. Residues 571–1035 (TGRCQWYIKA…MHIQEKGFHV (465 aa)) lie on the Cytoplasmic side of the membrane. Phosphotyrosine; by autocatalysis occurs at positions 605 and 611. The 314-residue stretch at 630–943 (IRIERVIGAG…RNPSALHTLV (314 aa)) folds into the Protein kinase domain. ATP is bound by residues 636–644 (IGAGEFGEV) and lysine 662. Aspartate 797 acts as the Proton acceptor in catalysis. A phosphotyrosine; by autocatalysis mark is found at tyrosine 830 and tyrosine 977. Residues 960 to 1024 (PLFVTVGDWL…VSSIQTLRLH (65 aa)) form the SAM domain. Residues 1033-1035 (FHV) carry the PDZ-binding motif.

The protein belongs to the protein kinase superfamily. Tyr protein kinase family. Ephrin receptor subfamily. Heterotetramer upon binding of the ligand. The heterotetramer is composed of an ephrin dimer and a receptor dimer. Oligomerization is probably required to induce biological responses. Interacts (via SAM domain) with ANKS1A (via SAM domain). In terms of tissue distribution, brain.

It localises to the membrane. The enzyme catalyses L-tyrosyl-[protein] + ATP = O-phospho-L-tyrosyl-[protein] + ADP + H(+). Functionally, receptor tyrosine kinase which binds promiscuously GPI-anchored ephrin-A family ligands residing on adjacent cells, leading to contact-dependent bidirectional signaling into neighboring cells. The signaling pathway downstream of the receptor is referred to as forward signaling while the signaling pathway downstream of the ephrin ligand is referred to as reverse signaling. The polypeptide is Ephrin type-A receptor 6 (Epha6) (Rattus norvegicus (Rat)).